The following is a 966-amino-acid chain: Next to BRCA1 gene 1 protein (966 aa).

The 82-residue stretch at 4-85 folds into the PB1 domain; that stretch reads QVTLNVTFKN…NQLQMQVHEG (82 aa). Residue Ser-116 is modified to Phosphoserine. A ZZ-type zinc finger spans residues 212–264; that stretch reads SWHIACNNCQRRIVGVRYQCSLCPSYNICEDCEAGPYGHDTNHVLLKLRRPVV. Residues Cys-217, Cys-220, Cys-231, Cys-234, Cys-240, Cys-243, His-250, and His-254 each contribute to the Zn(2+) site. Residues 542–636 form an ATG8 family protein-binding region; the sequence is ASERELYIPS…KRKAENIASV (95 aa). Thr-586 carries the post-translational modification Phosphothreonine; by GSK3-alpha. Phosphoserine is present on residues Ser-590, Ser-596, and Ser-625. The segment covering 699–718 has biased composition (acidic residues); it reads EAVMEEEEDEEDEEEEDELK. Disordered regions lie at residues 699 to 728, 750 to 792, and 848 to 879; these read EAVM…SSAS, MYSS…QPQE, and VPDQ…HHGS. The tract at residues 727 to 738 is ATG8 family protein-binding; the sequence is ASSEDYIIILPE. The UBA domain maps to 913 to 957; that stretch reads SEDQTAALMAHLFEMGFCDRQLNLRLLKKHNYNILQVVTELLQLN.

As to quaternary structure, homooligomer and heterooligomer. Interacts with TRIM55. Interacts with titin/TTN. Interacts with RNF29, USP8, MAP1LC3A, MAP1LC3B, MAP1LC3C, GABARAP, GABARAPL1 and GABARAPL2. Binds to ubiquitin and ubiquitinated proteins. Interacts with SQSTM1. Interacts with TAX1BP1. Interacts with IRF3; this interaction mediates autophagic degradation of IRF3. Interacts with IL12A and IL12B. (Microbial infection) Interacts with Influenza A virus protein PB1; this interaction promotes NBR1-mediated selective autophagic degradation of MAVS. Post-translationally, (Microbial infection) Cleaved by S.pyogenes SpeB protease; leading to its degradation. Degradation by SpeB prevents autophagy, promoting to S.pyogenes intracellular replication. Phosphorylated by GSK3A; this phosphorylation inhibits NBR1 involvement in the formation of ubiquitinated protein aggregates.

The protein localises to the cytoplasm. It localises to the cytoplasmic vesicle. It is found in the autophagosome. The protein resides in the lysosome. Its subcellular location is the myofibril. The protein localises to the sarcomere. It localises to the m line. Functionally, ubiquitin-binding autophagy adapter that participates in different processes including host defense or intracellular homeostasis. Possesses a double function during the selective autophagy by acting as a shuttle bringing ubiquitinated proteins to autophagosomes and also by participating in the formation of protein aggregates. Plays a role in the regulation of the innate immune response by modulating type I interferon production and targeting ubiquitinated IRF3 for autophagic degradation. In response to oxidative stress, promotes an increase in SQSTM1 levels, phosphorylation, and body formation by preventing its autophagic degradation. In turn, activates the KEAP1-NRF2/NFE2L2 antioxidant pathway. Also plays non-autophagy role by mediating the shuttle of IL-12 to late endosome for subsequent secretion. The polypeptide is Next to BRCA1 gene 1 protein (NBR1) (Homo sapiens (Human)).